Reading from the N-terminus, the 281-residue chain is MIENRRGLDIFCHVMLIIGVLLILFPLYVAFVAASLDDTQVFQVPMTLIPGPHLWQNISHIWHAGVGNNSAPFGLMLFNSFVMAFAITVGKITVSMLSAYAIVYFRFPLRNLFFWLIFLTLMLPVEVRIFPTIQVIANLNMLDSYTGLTLPLMASATATFLFRQFFMTLPDELLEAARIDGAGAMRFFWDIVLPLSKTNLAALFVITFIYGWNQYLWPILITSDASMGTAVAGIRSMISSSGAPTQWNQVMAAMILTLIPPVAVVLLMQRWFVRGLVDSEK.

A run of 6 helical transmembrane segments spans residues Val-14 to Ala-34, Val-82 to Tyr-104, Phe-113 to Ile-133, Leu-142 to Phe-162, Phe-188 to Tyr-210, and Trp-247 to Leu-267. The ABC transmembrane type-1 domain maps to Leu-77–Met-268.

This sequence belongs to the binding-protein-dependent transport system permease family. UgpAE subfamily. As to quaternary structure, the complex is composed of two ATP-binding proteins (UgpC), two transmembrane proteins (UgpA and UgpE) and a solute-binding protein (UgpB).

The protein localises to the cell inner membrane. In terms of biological role, part of the ABC transporter complex UgpBAEC involved in sn-glycerol-3-phosphate (G3P) import. Probably responsible for the translocation of the substrate across the membrane. In Yersinia enterocolitica serotype O:8 / biotype 1B (strain NCTC 13174 / 8081), this protein is sn-glycerol-3-phosphate transport system permease protein UgpE (ugpE).